The sequence spans 1588 residues: uncharacterized protein (1588 aa).

A compositionally biased stretch (basic and acidic residues) spans 486–495; that stretch reads RKRLTSKTED. Disordered regions lie at residues 486–515 and 1146–1176; these read RKRL…KRRP and GGQD…RELN. A compositionally biased stretch (polar residues) spans 498–507; the sequence is NQWTRDCQNS. The segment covering 1150-1169 has biased composition (low complexity); it reads NVSDQSENQSENQSLESETS.

The protein localises to the virion. This is an uncharacterized protein from Acanthamoeba polyphaga (Amoeba).